A 122-amino-acid polypeptide reads, in one-letter code: Large ribosomal subunit protein uL14c (122 aa).

The protein belongs to the universal ribosomal protein uL14 family. As to quaternary structure, part of the 50S ribosomal subunit.

The protein resides in the plastid. Its subcellular location is the chloroplast. In terms of biological role, binds to 23S rRNA. The protein is Large ribosomal subunit protein uL14c of Morus indica (Mulberry).